The chain runs to 472 residues: 3-isopropylmalate dehydratase large subunit (472 aa).

Positions 350, 411, and 414 each coordinate [4Fe-4S] cluster.

Belongs to the aconitase/IPM isomerase family. LeuC type 1 subfamily. In terms of assembly, heterodimer of LeuC and LeuD. [4Fe-4S] cluster serves as cofactor.

It carries out the reaction (2R,3S)-3-isopropylmalate = (2S)-2-isopropylmalate. It participates in amino-acid biosynthesis; L-leucine biosynthesis; L-leucine from 3-methyl-2-oxobutanoate: step 2/4. In terms of biological role, catalyzes the isomerization between 2-isopropylmalate and 3-isopropylmalate, via the formation of 2-isopropylmaleate. The chain is 3-isopropylmalate dehydratase large subunit from Alcanivorax borkumensis (strain ATCC 700651 / DSM 11573 / NCIMB 13689 / SK2).